A 402-amino-acid polypeptide reads, in one-letter code: Argininosuccinate synthase (402 aa).

8-16 (AYSGGLDTS) is an ATP binding site. 2 residues coordinate L-citrulline: Y86 and S91. G116 provides a ligand contact to ATP. Residues T118, N122, and D123 each coordinate L-aspartate. N122 serves as a coordination point for L-citrulline. Residues R126, S175, S184, E260, and Y272 each coordinate L-citrulline.

Belongs to the argininosuccinate synthase family. Type 1 subfamily. In terms of assembly, homotetramer.

It is found in the cytoplasm. It catalyses the reaction L-citrulline + L-aspartate + ATP = 2-(N(omega)-L-arginino)succinate + AMP + diphosphate + H(+). Its pathway is amino-acid biosynthesis; L-arginine biosynthesis; L-arginine from L-ornithine and carbamoyl phosphate: step 2/3. This is Argininosuccinate synthase from Clostridium novyi (strain NT).